The primary structure comprises 66 residues: Large ribosomal subunit protein uL29 (66 aa).

Belongs to the universal ribosomal protein uL29 family.

This is Large ribosomal subunit protein uL29 from Rhizobium johnstonii (strain DSM 114642 / LMG 32736 / 3841) (Rhizobium leguminosarum bv. viciae).